Consider the following 347-residue polypeptide: MAEEPIRLTQYSHGAGUGCKISPKVLGTILHSELEKFYDPNLLVGNETADDAAVYDLGNGTAIISTTDFFMPIVDDPFDFGRIAATNAISDIFAMGGKPIMGIAILGFPTNVLPAEVAQKIVDGGRFACHQAGIALAGGHSIDSPEPIFGLAVTGVIDTEKVKRNASAKSGCKLYMTKPLGIGILTTAEKKGKLKPEHQGLATAAMCQMNSIGSQFSQVDGVTAMTDVTGFGLLGHLIEICEGSNLSAVVFSDKIKTLDGVKDYIAQGCVPGGTGRNFESYGHKVGALTEEQKAILCDPQTSGGLLVAVEPNSVQTIIEIAKDTGIDLYEVGKLKPKSESDIVVEVK.

The active site involves Sec17. Sec17 is a non-standard amino acid (selenocysteine). Residues Lys20 and 48-50 (TAD) contribute to the ATP site. Position 51 (Asp51) interacts with Mg(2+). ATP contacts are provided by residues Asp68, Asp91, and 139–141 (GHS). Asp91 provides a ligand contact to Mg(2+). Asp227 contributes to the Mg(2+) binding site.

It belongs to the selenophosphate synthase 1 family. Class I subfamily. As to quaternary structure, homodimer. It depends on Mg(2+) as a cofactor.

It catalyses the reaction hydrogenselenide + ATP + H2O = selenophosphate + AMP + phosphate + 2 H(+). Synthesizes selenophosphate from selenide and ATP. This is Selenide, water dikinase from Haemophilus influenzae (strain 86-028NP).